We begin with the raw amino-acid sequence, 225 residues long: Insulin-induced gene 2 protein (225 aa).

The Cytoplasmic portion of the chain corresponds to 1 to 28 (MAEGETESPGPKKCGPYISSVTSQSVNL). Residues 29-51 (MIRGVVLFFIGVFLALVLNLLQI) form a helical membrane-spanning segment. At 52–70 (QRNVTLFPPDVIASIFSSA) the chain is on the lumenal side. The helical transmembrane segment at 71 to 88 (WWVPPCCGTASAVIGLLY) threads the bilayer. At 89-103 (PCIDRHLGEPHKFKR) the chain is on the cytoplasmic side. The helical transmembrane segment at 104-126 (EWSSVMRCVAVFVGINHASAKVD) threads the bilayer. The Lumenal segment spans residues 127–129 (FDN). Residues 130-148 (NIQLSLTLAALSIGLWWTF) form a helical membrane-spanning segment. The Cytoplasmic portion of the chain corresponds to 149 to 153 (DRSRS). Ser-151 is subject to Phosphoserine; by PCK1. Residues 154-175 (GFGLGVGIAFLATVVTQLLVYN) form a helical membrane-spanning segment. Over 176 to 189 (GVYQYTSPDFLYVR) the chain is Lumenal. The chain crosses the membrane as a helical span at residues 190–207 (SWLPCIFFAGGITMGNIG). Residues 208 to 225 (RQLAMYECKVIAEKSHQE) lie on the Cytoplasmic side of the membrane. Cys-215 is subject to Cysteine sulfenic acid (-SOH); alternate. Residue Cys-215 forms a Glycyl cysteine thioester (Cys-Gly) (interchain with G-Cter in ubiquitin); alternate linkage. A KxHxx motif is present at residues 219–225 (AEKSHQE).

Belongs to the INSIG family. In terms of assembly, interacts with SCAP; interaction is direct and only takes place in the presence of sterols; it prevents interaction between SCAP and the coat protein complex II (COPII). Associates with the SCAP-SREBP complex (composed of SCAP and SREBF1/SREBP1 or SREBF2/SREBP2); association is mediated via its interaction with SCAP and only takes place in the presence of sterols. Interacts with RNF139. Interacts with RNF145. Post-translationally, phosphorylation at Ser-151 by PCK1 reduces binding to oxysterol, disrupting the interaction between INSIG2 and SCAP, thereby promoting nuclear translocation of SREBP proteins (SREBF1/SREBP1 or SREBF2/SREBP2) and subsequent transcription of downstream lipogenesis-related genes. Polyubiquitinated by AMFR/gp78 at Cys-215 in some tissues such as adipose tissues, undifferentiated myoblasts and liver, leading to its degradation. In differentiated myotubes, Cys-215 oxidation prevents ubiquitination at the same site, resulting in protein stabilization. In terms of processing, oxidized at Cys-215 in differentiated myotubes, preventing ubiquitination at the same site, and resulting in protein stabilization.

The protein localises to the endoplasmic reticulum membrane. In terms of biological role, oxysterol-binding protein that mediates feedback control of cholesterol synthesis by controlling both endoplasmic reticulum to Golgi transport of SCAP and degradation of HMGCR. Acts as a negative regulator of cholesterol biosynthesis by mediating the retention of the SCAP-SREBP complex in the endoplasmic reticulum, thereby blocking the processing of sterol regulatory element-binding proteins (SREBPs) SREBF1/SREBP1 and SREBF2/SREBP2. Binds oxysterol, including 22-hydroxycholesterol, 24-hydroxycholesterol, 25-hydroxycholesterol and 27-hydroxycholesterol, regulating interaction with SCAP and retention of the SCAP-SREBP complex in the endoplasmic reticulum. In presence of oxysterol, interacts with SCAP, retaining the SCAP-SREBP complex in the endoplasmic reticulum, thereby preventing SCAP from escorting SREBF1/SREBP1 and SREBF2/SREBP2 to the Golgi. Sterol deprivation or phosphorylation by PCK1 reduce oxysterol-binding, disrupting the interaction between INSIG2 and SCAP, thereby promoting Golgi transport of the SCAP-SREBP complex, followed by processing and nuclear translocation of SREBF1/SREBP1 and SREBF2/SREBP2. Also regulates cholesterol synthesis by regulating degradation of HMGCR: initiates the sterol-mediated ubiquitin-mediated endoplasmic reticulum-associated degradation (ERAD) of HMGCR via recruitment of the reductase to the ubiquitin ligase RNF139. The chain is Insulin-induced gene 2 protein from Homo sapiens (Human).